The chain runs to 62 residues: Temporin-HN1 (62 aa).

Positions 1–22 (MFTLKKSLLLLLFLGTINLSLS) are cleaved as a signal peptide. The propeptide occupies 23 to 44 (EQERNAEEERRDDPEEMDAEVE). Position 60 is a leucine amide (Leu-60).

As to expression, expressed by the skin glands.

The protein localises to the secreted. Its function is as follows. Has antimicrobial activity against some Gram-positive bacteria and fungi but has no activity against a range of Gram-negative bacteria except P.faecalis. Active against the Gram-positive bacteria S.aureus ATCC 25923 (MIC=37.5 uM), S.carnosus KHS (MIC=37.5 uM), B.licheniformis X39 (MIC=19 uM), R.rhodochrous X15 (MIC=4.8 uM), is virtually inactive against E.faecalis 981 (MIC=150 uM) and inactive against E.faecium 091299. Has some antimicrobial activity against the Gram-negative bacterium P.faecalis X29 (MIC=75 uM) and is inactive against E.coli, P.aeruginosa and S.typhi. Has antifungal activity against C.albicans ATCC 2002 (MIC=19 uM) and lower activity against the slime mold 090223 (MIC=75 uM). Has low hemolytic activity against human erythrocytes (LC(50)=75 uM). In Odorrana hainanensis (Odor frog), this protein is Temporin-HN1.